Here is a 201-residue protein sequence, read N- to C-terminus: Small ribosomal subunit protein uS4c (201 aa).

Residues 15 to 43 (LGALPGLTNKRPRAGSDLRNQSRSGKKSQ) form a disordered region. Residues 89 to 152 (MRLDNILFRL…NSRTLIQNSL (64 aa)) form the S4 RNA-binding domain.

This sequence belongs to the universal ribosomal protein uS4 family. Part of the 30S ribosomal subunit. Contacts protein S5. The interaction surface between S4 and S5 is involved in control of translational fidelity.

It is found in the plastid. The protein localises to the chloroplast. In terms of biological role, one of the primary rRNA binding proteins, it binds directly to 16S rRNA where it nucleates assembly of the body of the 30S subunit. Its function is as follows. With S5 and S12 plays an important role in translational accuracy. The protein is Small ribosomal subunit protein uS4c (rps4) of Panax ginseng (Korean ginseng).